The chain runs to 611 residues: Leukotriene A-4 hydrolase (611 aa).

Position 73 is an N6-acetyllysine (lysine 73). Residues 135 to 137 (QCQ) and 267 to 272 (PYGGME) each bind a peptide. Residue histidine 296 participates in Zn(2+) binding. Residue glutamate 297 is the Proton acceptor of the active site. Histidine 300 and glutamate 319 together coordinate Zn(2+). Lysine 337 carries the post-translational modification N6-acetyllysine. The Proton donor role is filled by tyrosine 384. Lysine 414 is subject to N6-acetyllysine. The residue at position 416 (serine 416) is a Phosphoserine. 564-566 (RMK) contributes to the a peptide binding site. N6-acetyllysine is present on lysine 573.

Belongs to the peptidase M1 family. Monomer. It depends on Zn(2+) as a cofactor. Post-translationally, phosphorylation at Ser-416 inhibits leukotriene-A4 hydrolase activity.

Its subcellular location is the cytoplasm. It catalyses the reaction leukotriene A4 + H2O = leukotriene B4. The enzyme catalyses (5S,6S)-epoxy-(18R)-hydroxy-(7E,9E,11Z,14Z,16E)-eicosapentaenoate + H2O = resolvin E1. The catalysed reaction is (5S,6S)-epoxy-(18S)-hydroxy-(7E,9E,11Z,14Z,16E)-eicosapentaenoate + H2O = 18S-resolvin E1. It carries out the reaction Release of the N-terminal residue from a tripeptide.. It functions in the pathway lipid metabolism; leukotriene B4 biosynthesis. Inhibited by bestatin. Inhibited by captopril. The epoxide hydrolase activity is restrained by suicide inactivation that involves binding of LTA4 to Tyr-379. 4-(4-benzylphenyl)thiazol-2-amine (ARM1) selectively inhibits the epoxide hydrolase activity. Functionally, bifunctional zinc metalloenzyme that comprises both epoxide hydrolase (EH) and aminopeptidase activities. Acts as an epoxide hydrolase to catalyze the conversion of LTA4 to the pro-inflammatory mediator leukotriene B4 (LTB4). Also has aminopeptidase activity, with high affinity for N-terminal arginines of various synthetic tripeptides. In addition to its pro-inflammatory EH activity, may also counteract inflammation by its aminopeptidase activity, which inactivates by cleavage another neutrophil attractant, the tripeptide Pro-Gly-Pro (PGP), a bioactive fragment of collagen generated by the action of matrix metalloproteinase-9 (MMP9) and prolylendopeptidase (PREPL). Involved also in the biosynthesis of resolvin E1 and 18S-resolvin E1 from eicosapentaenoic acid, two lipid mediators that show potent anti-inflammatory and pro-resolving actions. The sequence is that of Leukotriene A-4 hydrolase (Lta4h) from Rattus norvegicus (Rat).